Consider the following 680-residue polypeptide: SH3 domain-binding protein 1 (680 aa).

Over residues 1–11 the composition is skewed to basic residues; it reads MMKRQLHRMRQ. Disordered regions lie at residues 1 to 24 and 160 to 184; these read MMKR…TPET and SQAA…HTTT. An interaction with CGNL1 region spans residues 1-275; sequence MMKRQLHRMR…TAAPFSRVYG (275 aa). Residues 81–262 form the BAR domain; the sequence is MAESFKELDP…RDNHSQADHS (182 aa). Residues 160–169 show a composition bias toward polar residues; that stretch reads SQAAKNSGSN. 2 positions are modified to phosphoserine: Ser-241 and Ser-262. The Rho-GAP domain occupies 276 to 469; sequence VSLRTHLQDL…ALIQNADTLF (194 aa). The segment at 470–680 is interaction with CD2AP; it reads PGDINFNVSG…RPRGLISETE (211 aa). A disordered region spans residues 488–680; it reads EKVSSQQVSE…RPRGLISETE (193 aa). Over residues 502–516 the composition is skewed to pro residues; sequence VTVPAPATTPAPTPA. Phosphoserine is present on Ser-535. Residues 536-546 are compositionally biased toward polar residues; that stretch reads PKVSRNPTETA. Residues 561–571 show a composition bias toward pro residues; sequence PARPTMPPPQP. Ser-582 bears the Phosphoserine mark. The residue at position 592 (Thr-592) is a Phosphothreonine. The SH3-binding signature appears at 607–616; it reads APTMPPPLPP. The segment covering 609-621 has biased composition (pro residues); it reads TMPPPLPPVPPQP. A Phosphoserine modification is found at Ser-632. A compositionally biased stretch (pro residues) spans 660–671; that stretch reads HPPPPALPPQPR.

As to quaternary structure, interacts with RAC1. Interacts with the exocyst via EXOC4 and EXOC8; required for the localization of both SH3BP1 and the exocyst to the leading edge of migrating cells. Interacts with CD2AP and CGNL1; probably part of a complex at cell junctions. Interacts with CAPZA1; recruits CAPZA1 to forming cell junctions. May interact with AFDN. Interacts with PLXND1; they dissociate upon SEMA3E binding to PLXND1 allowing SH3BP1 to transduce downstream signal through RAC1 inactivation. Interacts with ABL1, GRB2 and SRC (via SH3 domain). As to expression, expressed in all tissues examined. Highest levels found in spleen and brain, lowest in heart and liver.

The protein resides in the cell projection. It localises to the cell junction. Its subcellular location is the tight junction. The protein localises to the adherens junction. It is found in the phagocytic cup. The protein resides in the nucleus. It localises to the cytoplasm. Its subcellular location is the cytosol. In terms of biological role, GTPase activating protein (GAP) which specifically converts GTP-bound Rho-type GTPases including RAC1 and CDC42 in their inactive GDP-bound form. By specifically inactivating RAC1 at the leading edge of migrating cells, it regulates the spatiotemporal organization of cell protrusions which is important for proper cell migration. Also negatively regulates CDC42 in the process of actin remodeling and the formation of epithelial cell junctions. Through its GAP activity toward RAC1 and/or CDC42 plays a specific role in phagocytosis of large particles. Specifically recruited by a PI3 kinase/PI3K-dependent mechanism to sites of large particles engagement, inactivates RAC1 and/or CDC42 allowing the reorganization of the underlying actin cytoskeleton required for engulfment. It also plays a role in angiogenesis and the process of repulsive guidance as part of a semaphorin-plexin signaling pathway. Following the binding of PLXND1 to extracellular SEMA3E it dissociates from PLXND1 and inactivates RAC1, inducing the intracellular reorganization of the actin cytoskeleton and the collapse of cells. This chain is SH3 domain-binding protein 1, found in Mus musculus (Mouse).